Reading from the N-terminus, the 426-residue chain is Cell cycle checkpoint control protein RAD9B (426 aa).

Residue Ser-359 is modified to Phosphoserine.

Belongs to the rad9 family. As to quaternary structure, interacts with HUS1, HUS1B, RAD1, RAD9A and RAD17. In terms of tissue distribution, expressed in testis and skeletal muscle.

The polypeptide is Cell cycle checkpoint control protein RAD9B (RAD9B) (Homo sapiens (Human)).